We begin with the raw amino-acid sequence, 233 residues long: ATP synthase subunit a 2 (233 aa).

Transmembrane regions (helical) follow at residues phenylalanine 15 to glycine 35, tyrosine 78 to valine 98, serine 107 to isoleucine 127, isoleucine 169 to valine 189, and leucine 194 to isoleucine 214.

It belongs to the ATPase A chain family. In terms of assembly, F-type ATPases have 2 components, CF(1) - the catalytic core - and CF(0) - the membrane proton channel. CF(1) has five subunits: alpha(3), beta(3), gamma(1), delta(1), epsilon(1). CF(0) has four main subunits: a, b, b' and c.

The protein localises to the cellular thylakoid membrane. Its function is as follows. Key component of the proton channel; it plays a direct role in the translocation of protons across the membrane. This chain is ATP synthase subunit a 2, found in Picosynechococcus sp. (strain ATCC 27264 / PCC 7002 / PR-6) (Agmenellum quadruplicatum).